Consider the following 761-residue polypeptide: MSQLYALNGQPLAGKSDDLANKLAAFGLSQPNHSSLSEQQSTNSLLHGSGAFNKPPLSRNSTTNPLNLLYTQTQQPARSTTPFLLNPVGSSPGKLPVPSRNNSYLQGTAESNSGNFANNSISNNCWNSAYNSNSFEGTGSSPNFPPQNQFLSDSRSSIATLNAIPSLDQSVLLNPNLRARTPSLVPEHYFDDTDKSVHSKSSSGSNSLSEASNDDLESSIIQIVGGLPDDFDDRELSGIFTFCEGYDFSKIESENGHRKAIVYFRNAIAALKAKNMLNASSTNNFTIIQRDVVRQQENEYHKGIPPLTTPSLYSQRLSNNYDSTTPGFPRFSPANFDSVINKDVTSESRMSTSYPAVLEAFKSFNPIKAPKAEYLNQSRASMGNPSPSNWNNRLLQPSSKEQAVYSFQTQKNSKGLQFTSNELTNPTAKYSQLPNNIANIGESNSLSNQPNNFAQTSFDYQPNHPNAISPKAKFSLPSRPSYHKDNSFISKQAIDKSNPFEEALRLERTSPVKELPAIRPRTIPLNGVAPYESELRPPPKWKPMPDLKVVRSRPSLKQRPLRSAEYVRVCELKCLQEEEFDNKVLLEQVESNVQTDHNSPCNTIYVGNLSNPDQEKKLRLAFSKEKGYRRLCFKIKGNSPMCFVEFEEVCHAAKAMEKMQGAALDDKIKGGIRLSYSKNPLGVRSTENLSTTASLFQQHGPPKKSTDCYSAKASAAVERKYHFQNMTPKPNGTNSVTTLNRTQTHSSEVNDLFDIFEFPSK.

Polar residues-rich tracts occupy residues 31-46, 58-83, and 99-110; these read PNHSSLSEQQSTNSLL, SRNSTTNPLNLLYTQTQQPARSTTPF, and SRNNSYLQGTAE. Disordered stretches follow at residues 31 to 110 and 188 to 213; these read PNHS…GTAE and HYFDDTDKSVHSKSSSGSNSLSEASN. Over residues 188 to 197 the composition is skewed to basic and acidic residues; that stretch reads HYFDDTDKSV. Low complexity predominate over residues 199–211; sequence SKSSSGSNSLSEA. The 67-residue stretch at 223 to 289 folds into the RRM 1 domain; that stretch reads IVGGLPDDFD…SSTNNFTIIQ (67 aa). Over residues 442–466 the composition is skewed to polar residues; it reads ESNSLSNQPNNFAQTSFDYQPNHPN. The segment at 442-468 is disordered; sequence ESNSLSNQPNNFAQTSFDYQPNHPNAI. In terms of domain architecture, RRM 2 spans 602 to 679; sequence NTIYVGNLSN…GGIRLSYSKN (78 aa).

The sequence is that of RNA-binding protein mde7 (mde7) from Schizosaccharomyces pombe (strain 972 / ATCC 24843) (Fission yeast).